The chain runs to 232 residues: DQGAGVTYLEPSASQIGHKESIKDTARVLGRMYDGIEYRGFGQEVVEELAKYAGVPVFNGLTNEFHPTQMLADALTMREHSGKPLNQTAFAYVGDARYNMANSLLVLGAKLGMDVRIGAPKTLWPSENIVARARAVAEETGGKILLTENAEEAVKGVDFIHTDVWVSMGEPKEAWQERIDLLKDYRVTPELMEASGNPQVKFMHCLPAFHNRETKVGEWIYETFGLNGVEVT.

Carbamoyl phosphate contacts are provided by residues Gln-15, Arg-39, and His-66 to Gln-69. L-ornithine-binding positions include Asn-99, Asp-163, and Ser-167–Met-168. Residues His-204–Pro-207 and Thr-232 each bind carbamoyl phosphate.

Belongs to the aspartate/ornithine carbamoyltransferase superfamily. OTCase family.

It is found in the cytoplasm. It carries out the reaction carbamoyl phosphate + L-ornithine = L-citrulline + phosphate + H(+). The protein operates within amino-acid biosynthesis; L-arginine biosynthesis; L-arginine from L-ornithine and carbamoyl phosphate: step 1/3. In terms of biological role, reversibly catalyzes the transfer of the carbamoyl group from carbamoyl phosphate (CP) to the N(epsilon) atom of ornithine (ORN) to produce L-citrulline. The protein is Ornithine carbamoyltransferase (argF) of Neisseria sicca.